A 608-amino-acid polypeptide reads, in one-letter code: Threonine--tRNA ligase (608 aa).

The segment at 1–145 is editing domain; the sequence is MKTLLIHAKH…TIKPGRRVRP (145 aa). Catalytic regions lie at residues 192–489 and 193–489; these read PKYL…PSLP and KYLE…PSLP. Zn(2+)-binding residues include Cys-286, His-337, and His-458.

It belongs to the class-II aminoacyl-tRNA synthetase family. As to quaternary structure, homodimer. Zn(2+) serves as cofactor.

The protein localises to the cytoplasm. It catalyses the reaction tRNA(Thr) + L-threonine + ATP = L-threonyl-tRNA(Thr) + AMP + diphosphate + H(+). Its function is as follows. Catalyzes the attachment of threonine to tRNA(Thr) in a two-step reaction: L-threonine is first activated by ATP to form Thr-AMP and then transferred to the acceptor end of tRNA(Thr). Also edits incorrectly charged L-seryl-tRNA(Thr). In Thermofilum pendens (strain DSM 2475 / Hrk 5), this protein is Threonine--tRNA ligase.